We begin with the raw amino-acid sequence, 483 residues long: Aspartyl/glutamyl-tRNA(Asn/Gln) amidotransferase subunit B (483 aa).

The protein belongs to the GatB/GatE family. GatB subfamily. As to quaternary structure, heterotrimer of A, B and C subunits.

It catalyses the reaction L-glutamyl-tRNA(Gln) + L-glutamine + ATP + H2O = L-glutaminyl-tRNA(Gln) + L-glutamate + ADP + phosphate + H(+). It carries out the reaction L-aspartyl-tRNA(Asn) + L-glutamine + ATP + H2O = L-asparaginyl-tRNA(Asn) + L-glutamate + ADP + phosphate + 2 H(+). Its function is as follows. Allows the formation of correctly charged Asn-tRNA(Asn) or Gln-tRNA(Gln) through the transamidation of misacylated Asp-tRNA(Asn) or Glu-tRNA(Gln) in organisms which lack either or both of asparaginyl-tRNA or glutaminyl-tRNA synthetases. The reaction takes place in the presence of glutamine and ATP through an activated phospho-Asp-tRNA(Asn) or phospho-Glu-tRNA(Gln). This Rickettsia rickettsii (strain Iowa) protein is Aspartyl/glutamyl-tRNA(Asn/Gln) amidotransferase subunit B.